Reading from the N-terminus, the 118-residue chain is Small ribosomal subunit protein uS13 (118 aa).

Positions 94-118 (GLPVRGQRTKTNARTRKGPRKPIKK) are disordered.

This sequence belongs to the universal ribosomal protein uS13 family. In terms of assembly, part of the 30S ribosomal subunit. Forms a loose heterodimer with protein S19. Forms two bridges to the 50S subunit in the 70S ribosome.

Functionally, located at the top of the head of the 30S subunit, it contacts several helices of the 16S rRNA. In the 70S ribosome it contacts the 23S rRNA (bridge B1a) and protein L5 of the 50S subunit (bridge B1b), connecting the 2 subunits; these bridges are implicated in subunit movement. Contacts the tRNAs in the A and P-sites. The sequence is that of Small ribosomal subunit protein uS13 from Salmonella paratyphi A (strain ATCC 9150 / SARB42).